The sequence spans 118 residues: Acidic elicitin A1 (118 aa).

Residues 1-20 (MNFRALFAATVAALVGSTSA) form the signal peptide. 3 cysteine pairs are disulfide-bonded: Cys-23/Cys-91, Cys-47/Cys-76, and Cys-71/Cys-115.

The protein belongs to the elicitin family.

It localises to the secreted. Its function is as follows. Induces local and distal defense responses (incompatible hypersensitive reaction) in plants from the solanaceae and cruciferae families. Elicits leaf necrosis and causes the accumulation of pathogenesis-related proteins. Might interact with the lipidic molecules of the plasma membrane. The sequence is that of Acidic elicitin A1 (B14) from Phytophthora cryptogea.